The sequence spans 446 residues: Phosphoglucosamine mutase (446 aa).

Residue Ser-101 is the Phosphoserine intermediate of the active site. Mg(2+) contacts are provided by Ser-101, Asp-240, Asp-242, and Asp-244. Ser-101 carries the phosphoserine modification.

It belongs to the phosphohexose mutase family. Requires Mg(2+) as cofactor. In terms of processing, activated by phosphorylation.

The catalysed reaction is alpha-D-glucosamine 1-phosphate = D-glucosamine 6-phosphate. Its function is as follows. Catalyzes the conversion of glucosamine-6-phosphate to glucosamine-1-phosphate. In Coxiella burnetii (strain RSA 331 / Henzerling II), this protein is Phosphoglucosamine mutase.